The sequence spans 515 residues: Fatty acyl-CoA reductase 1 (515 aa).

Residues Met1–Asn465 are Cytoplasmic-facing. The helical transmembrane segment at Ile466–Ala484 threads the bilayer. Topologically, residues Arg485 to Tyr515 are peroxisomal.

The protein belongs to the fatty acyl-CoA reductase family.

Its subcellular location is the peroxisome membrane. The catalysed reaction is a long-chain fatty acyl-CoA + 2 NADPH + 2 H(+) = a long-chain primary fatty alcohol + 2 NADP(+) + CoA. It catalyses the reaction hexadecanoyl-CoA + 2 NADPH + 2 H(+) = hexadecan-1-ol + 2 NADP(+) + CoA. It carries out the reaction octadecanoyl-CoA + 2 NADPH + 2 H(+) = octadecan-1-ol + 2 NADP(+) + CoA. The enzyme catalyses (9Z)-octadecenoyl-CoA + 2 NADPH + 2 H(+) = (9Z)-octadecen-1-ol + 2 NADP(+) + CoA. The catalysed reaction is (9Z,12Z)-octadecadienoyl-CoA + 2 NADPH + 2 H(+) = (9Z,12Z)-octadecadien-1-ol + 2 NADP(+) + CoA. It catalyses the reaction eicosanoyl-CoA + 2 NADPH + 2 H(+) = eicosan-1-ol + 2 NADP(+) + CoA. It carries out the reaction 16-methylheptadecanoyl-CoA + 2 NADPH + 2 H(+) = 16-methylheptadecan-1-ol + 2 NADP(+) + CoA. The enzyme catalyses 18-methylnonadecanoyl-CoA + 2 NADPH + 2 H(+) = 18-methylnonadecan-1-ol + 2 NADP(+) + CoA. Its function is as follows. Catalyzes the reduction of saturated and unsaturated C16 or C18 fatty acyl-CoA to fatty alcohols. It plays an essential role in the production of ether lipids/plasmalogens which synthesis requires fatty alcohols. In parallel, it is also required for wax monoesters production since fatty alcohols also constitute a substrate for their synthesis. The polypeptide is Fatty acyl-CoA reductase 1 (far1) (Xenopus laevis (African clawed frog)).